A 113-amino-acid chain; its full sequence is Photosystem II reaction center Psb28 protein (113 aa).

This sequence belongs to the Psb28 family. As to quaternary structure, part of the photosystem II complex.

It is found in the cellular thylakoid membrane. This chain is Photosystem II reaction center Psb28 protein, found in Trichodesmium erythraeum (strain IMS101).